The primary structure comprises 344 residues: Probable dual-specificity RNA methyltransferase RlmN (344 aa).

Glutamate 83 (proton acceptor) is an active-site residue. The 235-residue stretch at 89-323 folds into the Radical SAM core domain; it reads YLDRKTICVS…VSVRRSRGKD (235 aa). An intrachain disulfide couples cysteine 96 to cysteine 328. [4Fe-4S] cluster contacts are provided by cysteine 103, cysteine 107, and cysteine 110. Residues 153 to 154, serine 185, 209 to 211, and asparagine 285 contribute to the S-adenosyl-L-methionine site; these read GE and SLH. Residue cysteine 328 is the S-methylcysteine intermediate of the active site.

This sequence belongs to the radical SAM superfamily. RlmN family. Requires [4Fe-4S] cluster as cofactor.

The protein resides in the cytoplasm. The enzyme catalyses adenosine(2503) in 23S rRNA + 2 reduced [2Fe-2S]-[ferredoxin] + 2 S-adenosyl-L-methionine = 2-methyladenosine(2503) in 23S rRNA + 5'-deoxyadenosine + L-methionine + 2 oxidized [2Fe-2S]-[ferredoxin] + S-adenosyl-L-homocysteine. It carries out the reaction adenosine(37) in tRNA + 2 reduced [2Fe-2S]-[ferredoxin] + 2 S-adenosyl-L-methionine = 2-methyladenosine(37) in tRNA + 5'-deoxyadenosine + L-methionine + 2 oxidized [2Fe-2S]-[ferredoxin] + S-adenosyl-L-homocysteine. Specifically methylates position 2 of adenine 2503 in 23S rRNA and position 2 of adenine 37 in tRNAs. In Deinococcus geothermalis (strain DSM 11300 / CIP 105573 / AG-3a), this protein is Probable dual-specificity RNA methyltransferase RlmN.